The sequence spans 647 residues: Epithelial sodium channel subunit beta (647 aa).

Residues 1 to 57 are Cytoplasmic-facing; it reads MIHGKMKRLKRYFTRALHRIQKGPGYTYKELLVWFCDNTNTHGPKRIIKEGPKKRVM. The helical transmembrane segment at 58–78 threads the bilayer; it reads WFILTLVFAGLVFWQWGVLIL. Residues 79-552 lie on the Extracellular side of the membrane; the sequence is TYLSYGVSVS…GGQFGFWMGG (474 aa). 8 disulfide bridges follow: cysteine 104–cysteine 291, cysteine 215–cysteine 222, cysteine 268–cysteine 275, cysteine 381–cysteine 468, cysteine 406–cysteine 464, cysteine 410–cysteine 460, cysteine 419–cysteine 446, and cysteine 421–cysteine 435. A helical transmembrane segment spans residues 553–573; that stretch reads SVLCIIEFGEIIIDCMWITIL. The Cytoplasmic segment spans residues 574–647; that stretch reads KFLAWSRNRR…AEPVSSDEEN (74 aa). The interval 586 to 647 is disordered; sequence RKRPQYSDPP…AEPVSSDEEN (62 aa).

The protein belongs to the amiloride-sensitive sodium channel (TC 1.A.6) family. SCNN1B subfamily. Component of the heterotrimeric epithelial sodium channel (ENaC) composed of an alpha/SCNN1A, a beta/SCNN1B and a gamma/SCNN1G subunit.

It is found in the apical cell membrane. The protein resides in the cytoplasmic vesicle membrane. It catalyses the reaction Na(+)(in) = Na(+)(out). With respect to regulation, originally identified and characterized by its inhibition by the diuretic drug amiloride. This is one of the three pore-forming subunits of the heterotrimeric epithelial sodium channel (ENaC), a critical regulator of sodium balance and fluid homeostasis. ENaC operates in epithelial tissues, where it mediates the electrodiffusion of sodium ions from extracellular fluid through the apical membrane of cells, with water following osmotically. This Xenopus laevis (African clawed frog) protein is Epithelial sodium channel subunit beta (scnn1b-a).